The primary structure comprises 595 residues: MRTHYCSELRNDHVGERVTLCGWVDRRRDHGGVIFLDVRDRTGLIQIVSDPERTPEAYPQADALRNEYVVRIHGEVSRRPDDSLNPRLPTGEVEIYADQIELLNAVHQQLPFQVSTADVESVKEELRLKYRYLDLRRDRMHQNIMMRHRLIQSIRRYLEDQQNFVDIETPVLTRSTPEGARDYLVPSRANPGEWFALPQSPQIFKQLLMVSGFDRYYQIARCFRDEDLRADRQPEFTQLDMEMSFMSQEEIIQLNEDLMRHVFKTLKDIDLPKTFPQMTYAEAMERFGTDRPDTRFDLELVNVSDLLEDSGFKVFSGAIKKGGQVKVLPIPDGNAKISNVRIKPGGDLFSEASAGGAKGLAYIRVKDDGAIDTIGAIKDNLSPEQTAELLERTGAKPGHLLLFGAGPTEIVNASLSRLRLALGAEMKLIDPDQIDLLWITEFPMFEWNADEKRLEALHHPFTAPYPEDEADLKTARAQAYDLVYNGLEIGGGSLRIYQADLQRRVFDAIGLSEEEAQDKFGFLLNAFNFGAPPHGGIAYGIDRLAMLLSGEESIRDTIAFPKTQQARCLLTQAPSSVDQKQLKELQIKSTAEPKN.

Residue Glu-178 participates in L-aspartate binding. Residues 202–205 (QIFK) are aspartate. Arg-224 lines the L-aspartate pocket. ATP contacts are provided by residues 224–226 (RDE) and Gln-233. His-458 serves as a coordination point for L-aspartate. Glu-488 is an ATP binding site. Residue Arg-495 coordinates L-aspartate. An ATP-binding site is contributed by 540–543 (GIDR).

This sequence belongs to the class-II aminoacyl-tRNA synthetase family. Type 1 subfamily. As to quaternary structure, homodimer.

The protein resides in the cytoplasm. The catalysed reaction is tRNA(Asx) + L-aspartate + ATP = L-aspartyl-tRNA(Asx) + AMP + diphosphate. In terms of biological role, aspartyl-tRNA synthetase with relaxed tRNA specificity since it is able to aspartylate not only its cognate tRNA(Asp) but also tRNA(Asn). Reaction proceeds in two steps: L-aspartate is first activated by ATP to form Asp-AMP and then transferred to the acceptor end of tRNA(Asp/Asn). The sequence is that of Aspartate--tRNA(Asp/Asn) ligase from Acaryochloris marina (strain MBIC 11017).